The chain runs to 325 residues: 5-dehydro-2-deoxygluconokinase (325 aa).

This sequence belongs to the carbohydrate kinase PfkB family.

It catalyses the reaction 5-dehydro-2-deoxy-D-gluconate + ATP = 6-phospho-5-dehydro-2-deoxy-D-gluconate + ADP + H(+). Its pathway is polyol metabolism; myo-inositol degradation into acetyl-CoA; acetyl-CoA from myo-inositol: step 5/7. Its function is as follows. Catalyzes the phosphorylation of 5-dehydro-2-deoxy-D-gluconate (2-deoxy-5-keto-D-gluconate or DKG) to 6-phospho-5-dehydro-2-deoxy-D-gluconate (DKGP). This chain is 5-dehydro-2-deoxygluconokinase, found in Listeria monocytogenes serovar 1/2a (strain ATCC BAA-679 / EGD-e).